The primary structure comprises 454 residues: MSIRVQKTFEALFELEEIRGIFRDSLPTGLSAEEEAAFRQRIGNLKAIVADLEAGTGTPKVTKIAGTLDVRSREEQYINIHPIQAAGRLTTEARKAIISYGDGYSTCDACRKPFRLDKISKPGIAEFHADLAKWLNMDHARVVPGARRGFQAVTGTLVNKGDSVIVSALAHYTEFLSVENAGGVIKEVPLNAKNIVTGEATAQKIEEVKTETGKLPVLVMIDHFDYQFANEHEIREIGKVAHQYDIPFLYNGAYTVGVQPVDGKKIGADFVVGSGHKSMASVAPSGVLATTKEWAPKALRTTAIVGDLTKRKFGIKEVELLGCTLMGGTLLSMIASFPAVKERVLHWDEQVKRSNYFIDRLLKISGSRVLSEYPRRHTLTKVDTTGSFDTVAKTHKRRGFYFSDELSSRGIVGEFAGATRTWKLNTYGLSEKQVHYLADAFTEIAEKFELPVTK.

Pyridoxal 5'-phosphate is bound by residues 146-147 (AR), Asn-251, and 274-276 (SGH). N6-(pyridoxal phosphate)lysine is present on Lys-277.

This sequence belongs to the SepCysS family. As to quaternary structure, homodimer. Interacts with SepRS. Pyridoxal 5'-phosphate serves as cofactor.

The catalysed reaction is O-phospho-L-seryl-tRNA(Cys) + hydrogen sulfide + H(+) = L-cysteinyl-tRNA(Cys) + phosphate. Functionally, converts O-phospho-L-seryl-tRNA(Cys) (Sep-tRNA(Cys)) to L-cysteinyl-tRNA(Cys) (Cys-tRNA(Cys)). This chain is O-phospho-L-seryl-tRNA:Cys-tRNA synthase 2, found in Methanoregula boonei (strain DSM 21154 / JCM 14090 / 6A8).